An 838-amino-acid chain; its full sequence is V-type proton ATPase 116 kDa subunit a 1 (838 aa).

Residues 1 to 388 (MGELFRSEEM…DAYGIGTYRE (388 aa)) lie on the Cytoplasmic side of the membrane. The chain crosses the membrane as a helical span at residues 389 to 407 (INPAPYTIITFPFLFAVMF). Over 408–409 (GD) the chain is Vacuolar. The chain crosses the membrane as a helical span at residues 410–426 (FGHGILMTLIAIWMVLR). The Cytoplasmic segment spans residues 427 to 441 (ESRILSQKSDNEMFS). The chain crosses the membrane as a helical span at residues 442–471 (TVFSGRYIILLMGLFSTYTGLIYNDCFSKS). Topologically, residues 472-535 (LNMFGSSWSV…ANNKLAFLNS (64 aa)) are vacuolar. The chain crosses the membrane as a helical span at residues 536 to 555 (FKMKMSVILGIIHMLFGVML). At 556–573 (SLLNHIYFKKPLNIYLGF) the chain is on the cytoplasmic side. A helical transmembrane segment spans residues 574 to 594 (IPEMIFMSSLFGYLVILIFYK). The Vacuolar segment spans residues 595–639 (WTAYDAHTSKEAPSPLIHFINMFLFSYGDTSNKMLYRGQKGIQCF). A helical membrane pass occupies residues 640–659 (LVVVALLCVPWMLVAKPLVL). At 660-725 (RHQYLRRKHL…DTVVYQAIHT (66 aa)) the chain is on the cytoplasmic side. The helical transmembrane segment at 726 to 750 (IEYCLGCISNTASYLRLWALSLAHA) threads the bilayer. Over 751–771 (QLSEVLWTMVIHTGLSVRSLA) the chain is Vacuolar. The helical transmembrane segment at 772-810 (GGFGLVFIFAAFATLTVAILLVMEGLSAFLHALRLHWIE) threads the bilayer. The Cytoplasmic portion of the chain corresponds to 811–838 (FQNKFYTGTGFKFLPFSFDPIREGKFDD).

The protein belongs to the V-ATPase 116 kDa subunit family. V-ATPase is a heteromultimeric enzyme made up of two complexes: the ATP-hydrolytic V1 complex and the proton translocation V0 complex. The V1 complex consists of three catalytic AB heterodimers that form a heterohexamer, three peripheral stalks each consisting of EG heterodimers, one central rotor including subunits D and F, and the regulatory subunits C and H. The proton translocation complex V0 consists of the proton transport subunit a, a ring of proteolipid subunits c9c'', rotary subunit d, subunits e and f, and two accessory subunits. Detected in brain (at protein level). Highest expression in brain, intermediate levels in kidney, and relatively low levels in bone and liver.

The protein resides in the cytoplasmic vesicle. It is found in the clathrin-coated vesicle membrane. Its subcellular location is the secretory vesicle. It localises to the synaptic vesicle membrane. The protein localises to the melanosome. Its function is as follows. Subunit of the V0 complex of vacuolar(H+)-ATPase (V-ATPase), a multisubunit enzyme composed of a peripheral complex (V1) that hydrolyzes ATP and a membrane integral complex (V0) that translocates protons. V-ATPase is responsible for acidifying and maintaining the pH of intracellular compartments and in some cell types, is targeted to the plasma membrane, where it is responsible for acidifying the extracellular environment. Required for assembly and activity of the vacuolar ATPase. The sequence is that of V-type proton ATPase 116 kDa subunit a 1 (ATP6V0A1) from Gallus gallus (Chicken).